The chain runs to 336 residues: Fructose-1,6-bisphosphatase class 1 (336 aa).

Residues E90, D112, L114, and D115 each contribute to the Mg(2+) site. Residues 115-118 (DGSS), N211, and K277 each bind substrate. E283 provides a ligand contact to Mg(2+).

It belongs to the FBPase class 1 family. Homotetramer. Requires Mg(2+) as cofactor.

Its subcellular location is the cytoplasm. It carries out the reaction beta-D-fructose 1,6-bisphosphate + H2O = beta-D-fructose 6-phosphate + phosphate. It functions in the pathway carbohydrate biosynthesis; gluconeogenesis. The polypeptide is Fructose-1,6-bisphosphatase class 1 (Pseudomonas paraeruginosa (strain DSM 24068 / PA7) (Pseudomonas aeruginosa (strain PA7))).